Consider the following 174-residue polypeptide: uncharacterized protein (174 aa).

Helical transmembrane passes span 8 to 28 (FLFIVVFLFHGFMFSVVNYVF) and 146 to 166 (IVSWILYVFLLATLFLSIQFI).

It localises to the cell membrane. This is an uncharacterized protein from Haemophilus influenzae (strain ATCC 51907 / DSM 11121 / KW20 / Rd).